The chain runs to 308 residues: Pseudouridine-5'-phosphate glycosidase (308 aa).

Glu-25 (proton donor) is an active-site residue. Residues Lys-86 and Val-106 each coordinate substrate. Mn(2+) is bound at residue Asp-142. 144–146 (SAD) contacts substrate. The active-site Nucleophile is the Lys-163.

The protein belongs to the pseudouridine-5'-phosphate glycosidase family. Homotrimer. Requires Mn(2+) as cofactor.

The catalysed reaction is D-ribose 5-phosphate + uracil = psi-UMP + H2O. Catalyzes the reversible cleavage of pseudouridine 5'-phosphate (PsiMP) to ribose 5-phosphate and uracil. Functions biologically in the cleavage direction, as part of a pseudouridine degradation pathway. The protein is Pseudouridine-5'-phosphate glycosidase of Symbiobacterium thermophilum (strain DSM 24528 / JCM 14929 / IAM 14863 / T).